The primary structure comprises 303 residues: UDP-N-acetylenolpyruvoylglucosamine reductase (303 aa).

Residues 27–207 form the FAD-binding PCMH-type domain; that stretch reads KVGGISQVFY…TSISQKLQKI (181 aa). Residue Arg175 is part of the active site. Ser224 acts as the Proton donor in catalysis. Glu294 is an active-site residue.

This sequence belongs to the MurB family. It depends on FAD as a cofactor.

Its subcellular location is the cytoplasm. The catalysed reaction is UDP-N-acetyl-alpha-D-muramate + NADP(+) = UDP-N-acetyl-3-O-(1-carboxyvinyl)-alpha-D-glucosamine + NADPH + H(+). It participates in cell wall biogenesis; peptidoglycan biosynthesis. Cell wall formation. The protein is UDP-N-acetylenolpyruvoylglucosamine reductase of Orientia tsutsugamushi (strain Boryong) (Rickettsia tsutsugamushi).